The sequence spans 412 residues: Peptidase T (412 aa).

Position 84 (H84) interacts with Zn(2+). D86 is an active-site residue. Residue D146 participates in Zn(2+) binding. E179 serves as the catalytic Proton acceptor. Zn(2+) is bound by residues E180, D202, and H385.

This sequence belongs to the peptidase M20B family. Zn(2+) serves as cofactor.

The protein resides in the cytoplasm. The enzyme catalyses Release of the N-terminal residue from a tripeptide.. Cleaves the N-terminal amino acid of tripeptides. This chain is Peptidase T, found in Haemophilus influenzae (strain PittGG).